The chain runs to 121 residues: Large ribosomal subunit protein bL12 (121 aa).

This sequence belongs to the bacterial ribosomal protein bL12 family. As to quaternary structure, homodimer. Part of the ribosomal stalk of the 50S ribosomal subunit. Forms a multimeric L10(L12)X complex, where L10 forms an elongated spine to which 2 to 4 L12 dimers bind in a sequential fashion. Binds GTP-bound translation factors.

Forms part of the ribosomal stalk which helps the ribosome interact with GTP-bound translation factors. Is thus essential for accurate translation. The protein is Large ribosomal subunit protein bL12 of Baumannia cicadellinicola subsp. Homalodisca coagulata.